The sequence spans 700 residues: MRYPGRMTDAPPDPRARYLALRDEVALHNRAYYEQDAPTIPDDEYDRLARELRELEAAHPEFADDHSPVQTVGGAPSSAFEPVTHPTQMTSLDNVFDDDELRDWQEKLARSLGLPLDTDDFTFTGELKIDGLSVNLYYLDGELQWAATRGNGRVGEIVTAQVLTIPDIPQKLEGLKGELEVRGEVYLSRADFAAFNAQAEELGTPLLKNPRNGAAGALRQKDPEVTRTRHLKAILYAVGKRDGVPARTQWEVLEWLSAQGFPTSRSSEHLRGIAAAADYHARMIRAHADFEFDADGTVLKLDSLSQQEEAGFTSRAPRWAIAYKFPVEEVETVLESITVNVGRTGKLAPLAHLSPRLIEGSTVSKATLHNEDYIRDMDLRVGDTVLVRKSGGVIPQIMRVLPDKRPADAAPFEFPTHCPVCGHEAVRAEGDANTYCPNPACPAQSFERIRYFVSRGAMDVRGIGEKLVTQLLHEGLIHDAAGLYTLSAEQLAGLERGGEKKAGNILGQLEASKTKPLWRLINALGMSHVGQRNAQALARAFGTLEGLLAATPEQIEAVPGLGGIIAQSVTASLADPAMRDLIARLQASGVAPQAEEVTRTDQLSGLNFVLTGALSRPREVIKAELEAAGGRVTGSVTKKTSYLVAGEDAGSKLARAGELGVPVLDEAGLAALLAERGLGERGVAEDGMSGAETEAAPAES.

Residues 42–46 (DDEYD), 91–92 (SL), and Glu126 contribute to the NAD(+) site. Catalysis depends on Lys128, which acts as the N6-AMP-lysine intermediate. Residues Arg149, Glu184, Lys300, and Lys324 each contribute to the NAD(+) site. Residues Cys418, Cys421, Cys436, and Cys441 each coordinate Zn(2+). The BRCT domain occupies 598–686 (TRTDQLSGLN…GLGERGVAED (89 aa)).

The protein belongs to the NAD-dependent DNA ligase family. LigA subfamily. Mn(2+) is required as a cofactor.

It carries out the reaction NAD(+) + (deoxyribonucleotide)n-3'-hydroxyl + 5'-phospho-(deoxyribonucleotide)m = (deoxyribonucleotide)n+m + AMP + beta-nicotinamide D-nucleotide.. DNA ligase that catalyzes the formation of phosphodiester linkages between 5'-phosphoryl and 3'-hydroxyl groups in double-stranded DNA using NAD as a coenzyme and as the energy source for the reaction. It is essential for DNA replication and repair of damaged DNA. This is DNA ligase from Deinococcus radiodurans (strain ATCC 13939 / DSM 20539 / JCM 16871 / CCUG 27074 / LMG 4051 / NBRC 15346 / NCIMB 9279 / VKM B-1422 / R1).